Here is a 246-residue protein sequence, read N- to C-terminus: Bis(5'-nucleosyl)-tetraphosphatase PrpE [asymmetrical] (246 aa).

Belongs to the PrpE family. Ni(2+) is required as a cofactor.

The enzyme catalyses P(1),P(4)-bis(5'-guanosyl) tetraphosphate + H2O = GMP + GTP + 2 H(+). Its function is as follows. Asymmetrically hydrolyzes Ap4p to yield AMP and ATP. This is Bis(5'-nucleosyl)-tetraphosphatase PrpE [asymmetrical] from Bacillus cereus (strain AH820).